A 304-amino-acid chain; its full sequence is Glutaminase (304 aa).

The substrate site is built by serine 63, asparagine 113, glutamate 157, asparagine 164, tyrosine 188, tyrosine 240, and valine 258.

It belongs to the glutaminase family. In terms of assembly, homotetramer.

It catalyses the reaction L-glutamine + H2O = L-glutamate + NH4(+). This is Glutaminase from Christiangramia forsetii (strain DSM 17595 / CGMCC 1.15422 / KT0803) (Gramella forsetii).